Here is a 389-residue protein sequence, read N- to C-terminus: Ribonucleoside-diphosphate reductase subunit M2 (389 aa).

The residue at position 20 (S20) is a Phosphoserine. T33 carries the phosphothreonine modification. The Cy motif lies at 49-51 (RRI). 3 residues coordinate Fe cation: D138, E169, and H172. Y176 is an active-site residue. Residues E232, E266, and H269 each coordinate Fe cation.

Belongs to the ribonucleoside diphosphate reductase small chain family. In terms of assembly, heterodimer of a large and a small subunit. Interacts (via Cy motif and when phosphorylated at Thr-33) with CCNF; the interaction occurs exclusively in G2 and early M. Fe cation is required as a cofactor. Phosphorylation on Ser-20 relieves the inhibitory effect on Wnt signaling. Phosphorylated on Thr-33 by CDK1 and CDK2; predominantly in G2 and M phase. Post-translationally, ubiquitinated by the SCF(CCNF) E3 ubiquitin-protein ligase complex; leading to its degradation by the proteasome.

The protein localises to the cytoplasm. Its subcellular location is the nucleus. It carries out the reaction a 2'-deoxyribonucleoside 5'-diphosphate + [thioredoxin]-disulfide + H2O = a ribonucleoside 5'-diphosphate + [thioredoxin]-dithiol. Its function is as follows. Provides the precursors necessary for DNA synthesis. Catalyzes the biosynthesis of deoxyribonucleotides from the corresponding ribonucleotides. Inhibits Wnt signaling. This is Ribonucleoside-diphosphate reductase subunit M2 (RRM2) from Homo sapiens (Human).